Reading from the N-terminus, the 725-residue chain is Another transcription unit protein (725 aa).

Residues 1-10 (MGSQNSDDDS) are compositionally biased toward acidic residues. 3 disordered regions span residues 1 to 379 (MGSQ…PETR), 566 to 603 (RQAMRNQHKSLPKKKKPGAGEPLIGGGTSSYQHDEGSD), and 617 to 725 (YKKG…SDND). A compositionally biased stretch (low complexity) spans 11–70 (GSSGSSRSGSRSVTPQGGSAPGSQRSRRSGSGSDRSRSGSRSSRSRSGSGSPRSARSGSA). Residues 82–101 (RSKRSRSAHSRRSGSARSRK) show a composition bias toward basic residues. Residues 104–116 (TPESPQSHRSGSL) are compositionally biased toward polar residues. Residues 117–140 (QSRKSGSPQSRRSGSPQSRKSGST) are compositionally biased toward low complexity. Residues 141-160 (HSRRSGSAHSRRSGSARSRK) are compositionally biased toward basic residues. Ser-175, Ser-186, Ser-188, and Ser-190 each carry phosphoserine. Positions 206–223 (SRSRSRSRSGSRTSRSRS) are enriched in basic residues. A compositionally biased stretch (low complexity) spans 224–242 (KTGTPSPNRSRSGSASGSG). Phosphoserine occurs at positions 265, 267, and 269. Thr-286 carries the phosphothreonine modification. A phosphoserine mark is found at Ser-288, Ser-290, and Ser-312. Residues 306–318 (GDADDISDDEDEA) are compositionally biased toward acidic residues. Positions 325-353 (SPVRSKSRSQSKSHSHSRSMSHSRSRSRS) are enriched in basic residues. Positions 354-369 (RSRDKVESQVESAPKE) are enriched in basic and acidic residues. Residue Ser-355 is modified to Phosphoserine. Residues 571-582 (NQHKSLPKKKKP) are compositionally biased toward basic residues. Thr-593 carries the post-translational modification Phosphothreonine. Phosphoserine occurs at positions 595, 602, and 631. Phosphothreonine is present on Thr-632. 3 positions are modified to phosphoserine: Ser-635, Ser-636, and Ser-642. The segment covering 644–665 (FEARRSKKVDKAKASKALRDSD) has biased composition (basic and acidic residues). A compositionally biased stretch (gly residues) spans 710-725 (SGSGSGSGSGSGSDND).

In Drosophila melanogaster (Fruit fly), this protein is Another transcription unit protein (Atu).